The primary structure comprises 429 residues: Enolase (429 aa).

Gln-163 lines the (2R)-2-phosphoglycerate pocket. Glu-205 serves as the catalytic Proton donor. Mg(2+)-binding residues include Asp-242, Glu-287, and Asp-314. 4 residues coordinate (2R)-2-phosphoglycerate: Lys-339, Arg-368, Ser-369, and Lys-390. Lys-339 (proton acceptor) is an active-site residue.

It belongs to the enolase family. It depends on Mg(2+) as a cofactor.

It localises to the cytoplasm. The protein localises to the secreted. The protein resides in the cell surface. The catalysed reaction is (2R)-2-phosphoglycerate = phosphoenolpyruvate + H2O. The protein operates within carbohydrate degradation; glycolysis; pyruvate from D-glyceraldehyde 3-phosphate: step 4/5. Catalyzes the reversible conversion of 2-phosphoglycerate (2-PG) into phosphoenolpyruvate (PEP). It is essential for the degradation of carbohydrates via glycolysis. In Anaeromyxobacter sp. (strain Fw109-5), this protein is Enolase.